A 201-amino-acid chain; its full sequence is IMP cyclohydrolase (201 aa).

It belongs to the archaeal IMP cyclohydrolase family.

It carries out the reaction IMP + H2O = 5-formamido-1-(5-phospho-D-ribosyl)imidazole-4-carboxamide. Its pathway is purine metabolism; IMP biosynthesis via de novo pathway; IMP from 5-formamido-1-(5-phospho-D-ribosyl)imidazole-4-carboxamide: step 1/1. In terms of biological role, catalyzes the cyclization of 5-formylamidoimidazole-4-carboxamide ribonucleotide to IMP. The chain is IMP cyclohydrolase from Methanococcus maripaludis (strain C7 / ATCC BAA-1331).